The sequence spans 338 residues: DNA-directed RNA polymerase subunit alpha (338 aa).

Positions 1–226 (MLIAQRPTLT…ELFGLTRELN (226 aa)) are alpha N-terminal domain (alpha-NTD). The segment at 243 to 338 (YAESLGTPVE…DDDYAETEQY (96 aa)) is alpha C-terminal domain (alpha-CTD). Residues 319–338 (AAAEAYDEANDDDYAETEQY) are disordered. The span at 323–338 (AYDEANDDDYAETEQY) shows a compositional bias: acidic residues.

Belongs to the RNA polymerase alpha chain family. In terms of assembly, homodimer. The RNAP catalytic core consists of 2 alpha, 1 beta, 1 beta' and 1 omega subunit. When a sigma factor is associated with the core the holoenzyme is formed, which can initiate transcription.

The catalysed reaction is RNA(n) + a ribonucleoside 5'-triphosphate = RNA(n+1) + diphosphate. Functionally, DNA-dependent RNA polymerase catalyzes the transcription of DNA into RNA using the four ribonucleoside triphosphates as substrates. This Cutibacterium acnes (strain DSM 16379 / KPA171202) (Propionibacterium acnes) protein is DNA-directed RNA polymerase subunit alpha.